The primary structure comprises 113 residues: Integration host factor subunit alpha (113 aa).

This sequence belongs to the bacterial histone-like protein family. In terms of assembly, heterodimer of an alpha and a beta chain.

In terms of biological role, this protein is one of the two subunits of integration host factor, a specific DNA-binding protein that functions in genetic recombination as well as in transcriptional and translational control. The polypeptide is Integration host factor subunit alpha (Rhodopseudomonas palustris (strain BisA53)).